Reading from the N-terminus, the 293-residue chain is Probable endonuclease 4 (293 aa).

9 residues coordinate Zn(2+): His78, His118, Glu154, Asp188, His191, His225, Asp238, His240, and Glu270.

Belongs to the AP endonuclease 2 family. Zn(2+) serves as cofactor.

It carries out the reaction Endonucleolytic cleavage to 5'-phosphooligonucleotide end-products.. In terms of biological role, endonuclease IV plays a role in DNA repair. It cleaves phosphodiester bonds at apurinic or apyrimidinic (AP) sites, generating a 3'-hydroxyl group and a 5'-terminal sugar phosphate. This is Probable endonuclease 4 from Vibrio vulnificus (strain CMCP6).